The chain runs to 594 residues: Fidgetin-like protein 1 (594 aa).

Disordered regions lie at residues 1-79 (MYSP…DDEL) and 239-261 (QSIG…KRCS). Residues 56–73 (PSDSAQQQPPFKSRSQQN) are compositionally biased toward polar residues. ATP is bound by residues Ala-319 and 359–364 (GTGKTM).

The protein belongs to the AAA ATPase family. As to quaternary structure, hexamer. Mg(2+) is required as a cofactor. In terms of tissue distribution, expressed in germ cells.

Its subcellular location is the nucleus. The enzyme catalyses ATP + H2O = ADP + phosphate + H(+). In terms of biological role, has a role in spindle assembly which acts in the progression through mitosis during embryogenesis. Required for fertility. The chain is Fidgetin-like protein 1 (figl-1) from Caenorhabditis elegans.